The primary structure comprises 424 residues: MSILIKNGHVIYGENLDVVRADVLIESNRIVSVERNINEAADTVIDATGRVVSPGFINLHTHSPMGLLRGLADDLPLMEWLQNHIWPREAKLTPEYVKVGAYLGALEMIRSGTTTFLDMYFHMDKVAEAVLDAGLRGYLSYGMIDLGDPDRTEKELKEALREMEAIEKLNSERVHFVFGPHAPYTCSIALLKEVRKLASEHNKLITIHVSETMAEIGQITERYGKSPVVLLDDIGFLGNDVIIAHGVWLDSRDIQILARHGVTVAHNPGSNMKLASGVMPLEKLLNAGVNIGLGTDGSASNNNLDMLEEMKLAALLHKVHNLDPTIADARTVFRMATQNGAKALRLNAGIIKEGYLADIAIINFNRPHLRPINDVISHLVYSANGNDVETTIVDGKILMLDGEVLTLDEEKVISEAEKVSEKLA.

Residues His60 and His62 each coordinate Zn(2+). Residues Glu89 and His181 each contribute to the substrate site. His208 serves as a coordination point for Zn(2+). Substrate is bound by residues Glu211 and Asp296. Asp296 serves as a coordination point for Zn(2+).

It belongs to the metallo-dependent hydrolases superfamily. MTA/SAH deaminase family. The cofactor is Zn(2+).

It catalyses the reaction S-adenosyl-L-homocysteine + H2O + H(+) = S-inosyl-L-homocysteine + NH4(+). It carries out the reaction S-methyl-5'-thioadenosine + H2O + H(+) = S-methyl-5'-thioinosine + NH4(+). Catalyzes the deamination of 5-methylthioadenosine and S-adenosyl-L-homocysteine into 5-methylthioinosine and S-inosyl-L-homocysteine, respectively. Is also able to deaminate adenosine. This is 5-methylthioadenosine/S-adenosylhomocysteine deaminase from Thermococcus kodakarensis (strain ATCC BAA-918 / JCM 12380 / KOD1) (Pyrococcus kodakaraensis (strain KOD1)).